Here is a 941-residue protein sequence, read N- to C-terminus: UvrABC system protein A (941 aa).

31–38 (GLSGSGKS) lines the ATP pocket. The C4-type zinc-finger motif lies at 253-280 (CPICGYSMRELEPRLFSFNNPAGACPTC). ABC transporter domains are found at residues 310–587 (WDRR…PESL) and 607–937 (ANPE…RFLK). 640-647 (GVSGSGKS) is an ATP binding site. The C4-type zinc finger occupies 740–766 (CEACQGDGVIKVEMHFLPDIYVPCDQC).

Belongs to the ABC transporter superfamily. UvrA family. As to quaternary structure, forms a heterotetramer with UvrB during the search for lesions.

It is found in the cytoplasm. Its function is as follows. The UvrABC repair system catalyzes the recognition and processing of DNA lesions. UvrA is an ATPase and a DNA-binding protein. A damage recognition complex composed of 2 UvrA and 2 UvrB subunits scans DNA for abnormalities. When the presence of a lesion has been verified by UvrB, the UvrA molecules dissociate. This Salmonella typhi protein is UvrABC system protein A.